We begin with the raw amino-acid sequence, 291 residues long: Methionine aminopeptidase (291 aa).

His65 contributes to the substrate binding site. The a divalent metal cation site is built by Asp85, Asp96, and His155. His163 contributes to the substrate binding site. Glu188 and Glu276 together coordinate a divalent metal cation.

It belongs to the peptidase M24A family. Methionine aminopeptidase archaeal type 2 subfamily. In terms of assembly, monomer. It depends on Co(2+) as a cofactor. Zn(2+) serves as cofactor. Mn(2+) is required as a cofactor. Requires Fe(2+) as cofactor.

The enzyme catalyses Release of N-terminal amino acids, preferentially methionine, from peptides and arylamides.. Functionally, removes the N-terminal methionine from nascent proteins. The N-terminal methionine is often cleaved when the second residue in the primary sequence is small and uncharged (Met-Ala-, Cys, Gly, Pro, Ser, Thr, or Val). The polypeptide is Methionine aminopeptidase (Archaeoglobus fulgidus (strain ATCC 49558 / DSM 4304 / JCM 9628 / NBRC 100126 / VC-16)).